Here is a 318-residue protein sequence, read N- to C-terminus: Methionyl-tRNA formyltransferase (318 aa).

Residue 110-113 (SLLP) coordinates (6S)-5,6,7,8-tetrahydrofolate.

Belongs to the Fmt family.

It catalyses the reaction L-methionyl-tRNA(fMet) + (6R)-10-formyltetrahydrofolate = N-formyl-L-methionyl-tRNA(fMet) + (6S)-5,6,7,8-tetrahydrofolate + H(+). Its function is as follows. Attaches a formyl group to the free amino group of methionyl-tRNA(fMet). The formyl group appears to play a dual role in the initiator identity of N-formylmethionyl-tRNA by promoting its recognition by IF2 and preventing the misappropriation of this tRNA by the elongation apparatus. This chain is Methionyl-tRNA formyltransferase, found in Lacticaseibacillus casei (strain BL23) (Lactobacillus casei).